The chain runs to 231 residues: Putative 3-methyladenine DNA glycosylase (231 aa).

Belongs to the DNA glycosylase MPG family.

In Pseudomonas fluorescens (strain Pf0-1), this protein is Putative 3-methyladenine DNA glycosylase.